The primary structure comprises 2124 residues: Genome polyprotein (2124 aa).

A lipid anchor (N-myristoyl glycine; by host) is attached at G2. The interval 873–880 (VARDLLLI) is host EIF4E binding. The 163-residue stretch at 1102-1264 (VQIATYFRNF…SAATKNGKLD (163 aa)) folds into the SF3 helicase domain. Position 1130-1137 (1130-1137 (GKPGVGKS)) interacts with ATP. The span at 1415-1437 (DKPKEEEEEPEEKKEKKTEESKE) shows a compositional bias: basic and acidic residues. The disordered stretch occupies residues 1415–1446 (DKPKEEEEEPEEKKEKKTEESKEAAGPYNGPT). Y1442 carries the O-(5'-phospho-RNA)-tyrosine modification. In terms of domain architecture, Peptidase C3 spans 1459–1648 (SPLMDMEKKI…VGTRLTARMI (190 aa)). Active-site for protease 3C activity residues include H1501, D1535, and C1612. Residues 1893–2011 (PYLYDFDYSN…ASKFELDLVM (119 aa)) enclose the RdRp catalytic domain. Residues D1899 and D1997 each act as for RdRp activity in the active site.

It belongs to the picornaviruses polyprotein family. Interacts with host EIF4E. In terms of assembly, interacts with host IFIH1/MDA5; this interaction inhibits the induction of the IFN-beta signal pathway. In terms of processing, specific enzymatic cleavages by the viral protease in vivo yield a variety of precursors and mature proteins. The polyprotein seems to be cotranslationally cleaved at the 2A/2B junction by a ribosomal skip from one codon to the next without formation of a peptide bond. This process would release the P1-2A peptide from the translational complex. During virion maturation, immature virions are rendered infectious following cleavage of VP0 into VP4 and VP2. This maturation seems to be an autocatalytic event triggered by the presence of RNA in the capsid and is followed by a conformational change of the particle. Post-translationally, myristoylation is required during RNA encapsidation and formation of the mature virus particle. In terms of processing, uridylylated by the polymerase and is covalently linked to the 5'-end of genomic RNA. This uridylylated form acts as a nucleotide-peptide primer for the polymerase.

It localises to the virion. The protein resides in the host cytoplasm. The protein localises to the host nucleus. Its subcellular location is the host nucleolus. It is found in the host cytoplasmic vesicle membrane. The catalysed reaction is RNA(n) + a ribonucleoside 5'-triphosphate = RNA(n+1) + diphosphate. It carries out the reaction ATP + H2O = ADP + phosphate + H(+). It catalyses the reaction Selective cleavage of Gln-|-Gly bond in the poliovirus polyprotein. In other picornavirus reactions Glu may be substituted for Gln, and Ser or Thr for Gly.. Functionally, forms an icosahedral capsid of pseudo T=3 symmetry with capsid proteins VP2 and VP3. Together they form an icosahedral capsid composed of 60 copies of each VP1, VP2, and VP3, with a diameter of approximately 300 Angstroms. VP4 lies on the inner surface of the protein shell formed by VP1, VP2 and VP3. All the three latter proteins contain a beta-sheet structure called beta-barrel jelly roll. VP1 is situated at the 12 fivefold axes, whereas VP2 and VP3 are located at the quasi-sixfold axes. In terms of biological role, lies on the inner surface of the capsid shell. After binding to the host receptor, the capsid undergoes conformational changes. Capsid protein VP4 is released, capsid protein VP1 N-terminus is externalized, and together, they shape a pore in the host membrane through which the viral genome is translocated into the host cell cytoplasm. After genome has been released, the channel shrinks. Its function is as follows. VP0 precursor is a component of immature procapsids. Involved in host translation shutoff by inhibiting cap-dependent mRNA translation. Nuclear localization is required for this function. The resulting inhibition of cellular protein synthesis serves to ensure maximal viral gene expression and to evade host immune response. Functionally, affects membrane integrity and causes an increase in membrane permeability. In terms of biological role, associates with and induces structural rearrangements of intracellular membranes. It displays RNA-binding, nucleotide binding and NTPase activities. Interacts with IFIH1/MDA5 to inhibit the induction of the IFN-beta signal pathway. Its function is as follows. Serves as membrane anchor via its hydrophobic domain. Forms a primer, VPg-pU, which is utilized by the polymerase for the initiation of RNA chains. Functionally, cysteine protease that generates mature viral proteins from the precursor polyprotein. In addition to its proteolytic activity, it binds to viral RNA, and thus influences viral genome replication. RNA and substrate cooperatively bind to the protease. Cleaves host PABP1, this cleavage is important for viral replication. Cleaves host TANK and disrupts the TANK-TBK1-IKKepsilon-IRF3 complex, thereby inhibiting the induction of the IFN-beta signal pathway. In terms of biological role, replicates the genomic and antigenomic RNAs by recognizing replications specific signals. Performs VPg uridylylation. This is Genome polyprotein from Cosavirus A (isolate Human/Pakistan/0553/-) (HCoSV-A).